A 114-amino-acid chain; its full sequence is Large ribosomal subunit protein uL22c (114 aa).

This sequence belongs to the universal ribosomal protein uL22 family. Part of the 50S ribosomal subunit.

The protein localises to the plastid. Its subcellular location is the cyanelle. In terms of biological role, this protein binds specifically to 23S rRNA. Functionally, the globular domain of the protein is located near the polypeptide exit tunnel on the outside of the subunit, while an extended beta-hairpin is found that lines the wall of the exit tunnel in the center of the 70S ribosome. This Cyanophora paradoxa protein is Large ribosomal subunit protein uL22c (rpl22).